A 274-amino-acid chain; its full sequence is Secreted RxLR effector protein 40 (274 aa).

An N-terminal signal peptide occupies residues 1–21 (MRLYTQVVAASLVATLAIVDS). Positions 35 to 53 (RFLRQDNATVARVSEDGER) match the RxLR-dEER motif. N-linked (GlcNAc...) asparagine glycans are attached at residues N41, N74, and N258.

The protein belongs to the RxLR effector family.

It localises to the secreted. The protein resides in the host nucleus. The protein localises to the host cytoplasm. In terms of biological role, secreted effector that completely suppresses the host cell death induced by cell death-inducing proteins. This Plasmopara viticola (Downy mildew of grapevine) protein is Secreted RxLR effector protein 40.